The following is a 315-amino-acid chain: Hydrogenase-4 component C (315 aa).

The Periplasmic segment spans residues 1 to 10; the sequence is MRQTLCDGYL. Residues 11 to 31 traverse the membrane as a helical segment; sequence VIFALAQAVILLMLTPLFTGI. Residues 32-73 lie on the Cytoplasmic side of the membrane; sequence SRQIRARMHSRRGPGIWQDYRDIHKLFKRQEVAPTSSGLMFR. A helical membrane pass occupies residues 74–94; it reads LMPWVLISSMLVLAMALPLFI. Residues 95 to 98 lie on the Periplasmic side of the membrane; the sequence is TVSP. A helical transmembrane segment spans residues 99–119; it reads FAGGGDLITLIYLLALFRFFF. The Cytoplasmic segment spans residues 120–140; sequence ALSGLDTGSPFAGVGASRELT. Residues 141-161 form a helical membrane-spanning segment; sequence LGILVEPMLILSLLVLALIAG. Over 162 to 181 the chain is Periplasmic; it reads STHIEMISNTLAMGWNSPLT. Residues 182-202 form a helical membrane-spanning segment; the sequence is TVLALLACGFACFIEMGKIPF. Residues 203-228 lie on the Cytoplasmic side of the membrane; that stretch reads DVAEAEQELQEGPLTEYSGAGLALAK. The helical transmembrane segment at 229–249 threads the bilayer; sequence WGLGLKQVVMASLFVALFLPF. The Periplasmic portion of the chain corresponds to 250-256; sequence GRAQELS. Residues 257–277 form a helical membrane-spanning segment; sequence LACLLTSLVVTLLKVLLIFVL. Residues 278-289 are Cytoplasmic-facing; sequence ASIAENTLARGR. The helical transmembrane segment at 290-310 threads the bilayer; it reads FLLIHHVTWLGFSLAALAWVF. The Periplasmic segment spans residues 311–315; it reads WLTGL.

The protein belongs to the complex I subunit 1 family.

The protein localises to the cell inner membrane. Its function is as follows. Possible component of hydrogenase 4. The chain is Hydrogenase-4 component C from Escherichia coli (strain K12).